Reading from the N-terminus, the 223-residue chain is Neurotrophic factor BDNF precursor form (223 aa).

Residues S1–A5 form the signal peptide. The propeptide occupies A6–R114. N107 carries an N-linked (GlcNAc...) asparagine glycan. 2 cysteine pairs are disulfide-bonded: C127/C194 and C172/C223.

This sequence belongs to the NGF-beta family.

Its subcellular location is the secreted. Functionally, promotes the survival of neuronal populations that are all located either in the central nervous system or directly connected to it. In Eryx colubrinus colubrinus, this protein is Neurotrophic factor BDNF precursor form (BDNF).